A 449-amino-acid polypeptide reads, in one-letter code: Naphthalene 1,2-dioxygenase system, large oxygenase component (449 aa).

The Rieske domain maps to 39–137 (WLFLTHDSLI…LDKKCMGLKE (99 aa)). Cys81, His83, Cys101, and His104 together coordinate [2Fe-2S] cluster. Fe cation-binding residues include His208, His213, and Asp362.

The protein belongs to the bacterial ring-hydroxylating dioxygenase alpha subunit family. As to quaternary structure, the naphthalene dioxygenase (NDO) multicomponent enzyme system is composed of an electron transfer component and a dioxygenase component (iron sulfur protein (ISP)). The electron transfer component is composed of a ferredoxin reductase (NdoR) and a ferredoxin (NdoA), and the dioxygenase component is formed of a heterohexamer (trimer of heterodimers) of three large alpha subunits (NdoB) and three small beta subunits (NdoC). The cofactor is [2Fe-2S] cluster. It depends on Fe(2+) as a cofactor.

It carries out the reaction naphthalene + NADH + O2 + H(+) = (1R,2S)-1,2-dihydronaphthalene-1,2-diol + NAD(+). It participates in aromatic compound metabolism; naphthalene degradation. Functionally, component of the naphthalene dioxygenase (NDO) multicomponent enzyme system which catalyzes the incorporation of both atoms of molecular oxygen into naphthalene to form cis-(1R,2S)-dihydroxy-1,2-dihydronaphthalene. The alpha subunit has a catalytic role in the holoenzyme. The protein is Naphthalene 1,2-dioxygenase system, large oxygenase component of Pseudomonas aeruginosa.